A 223-amino-acid polypeptide reads, in one-letter code: Pyridoxine/pyridoxamine 5'-phosphate oxidase (223 aa).

Substrate contacts are provided by residues 13 to 16 (RKNY) and lysine 73. Residues 68-73 (RIVLLK), 83-84 (YT), lysine 90, and glutamine 112 contribute to the FMN site. The substrate site is built by tyrosine 130, arginine 134, and serine 138. FMN contacts are provided by residues 147-148 (QS) and tryptophan 193. 199 to 201 (RLH) is a substrate binding site. Arginine 203 contributes to the FMN binding site.

The protein belongs to the pyridoxamine 5'-phosphate oxidase family. As to quaternary structure, homodimer. It depends on FMN as a cofactor.

The catalysed reaction is pyridoxamine 5'-phosphate + O2 + H2O = pyridoxal 5'-phosphate + H2O2 + NH4(+). The enzyme catalyses pyridoxine 5'-phosphate + O2 = pyridoxal 5'-phosphate + H2O2. It participates in cofactor metabolism; pyridoxal 5'-phosphate salvage; pyridoxal 5'-phosphate from pyridoxamine 5'-phosphate: step 1/1. It functions in the pathway cofactor metabolism; pyridoxal 5'-phosphate salvage; pyridoxal 5'-phosphate from pyridoxine 5'-phosphate: step 1/1. Its function is as follows. Catalyzes the oxidation of either pyridoxine 5'-phosphate (PNP) or pyridoxamine 5'-phosphate (PMP) into pyridoxal 5'-phosphate (PLP). The polypeptide is Pyridoxine/pyridoxamine 5'-phosphate oxidase (Rhodopirellula baltica (strain DSM 10527 / NCIMB 13988 / SH1)).